A 113-amino-acid polypeptide reads, in one-letter code: Translation initiation factor IF-1, chloroplastic (113 aa).

Residues 8–83 (REKKNPREAK…SKGRIIYRLP (76 aa)) form the S1-like domain. The interval 86 to 113 (DSKRIEDSKDSEDLKDSEDLKDTKDSKD) is disordered.

Belongs to the IF-1 family. Component of the 30S ribosomal translation pre-initiation complex which assembles on the 30S ribosome in the order IF-2 and IF-3, IF-1 and N-formylmethionyl-tRNA(fMet); mRNA recruitment can occur at any time during PIC assembly.

It localises to the plastid. The protein localises to the chloroplast. In terms of biological role, one of the essential components for the initiation of protein synthesis. Stabilizes the binding of IF-2 and IF-3 on the 30S subunit to which N-formylmethionyl-tRNA(fMet) subsequently binds. Helps modulate mRNA selection, yielding the 30S pre-initiation complex (PIC). Upon addition of the 50S ribosomal subunit IF-1, IF-2 and IF-3 are released leaving the mature 70S translation initiation complex. This is Translation initiation factor IF-1, chloroplastic from Hordeum vulgare (Barley).